Here is a 363-residue protein sequence, read N- to C-terminus: MNIFQDWPEPIVRVQSLSESNLGAIPNRYVKPLSQRPNITPHNKHNPQTTTIPIIDLGRLYTDDLTLQAKTLDEISKACRELGFFQVVNHGMSPQLMDQAKATWREFFNLPMELKNMHANSPKTYEGYGSRLGVEKGAILDWSDYYYLHYQPSSLKDYTKWPSLPLHCREILEDYCKEMVKLCENLMKILSKNLGLQEDRLQNAFGGKEESGGCLRVNYYPKCPQPELTLGISPHSDPGGLTILLPDEQVASLQVRGSDDAWITVEPAPHAFIVNMGDQIQMLSNSIYKSVEHRVIVNPENERLSLAFFYNPKGNVPIEPLKELVTVDSPALYSSTTYDRYRQFIRTQGPRSKCHIDELKSPR.

The Fe2OG dioxygenase domain occupies 210–312 (ESGGCLRVNY…RLSLAFFYNP (103 aa)). Arg216 provides a ligand contact to jasmonate. The 2-oxoglutarate site is built by Asn218 and Tyr220. 3 residues coordinate Fe cation: His235, Asp237, and His293. The 2-oxoglutarate site is built by Arg303 and Ser305. Jasmonate is bound by residues Arg342 and Arg346.

It belongs to the iron/ascorbate-dependent oxidoreductase family. L-ascorbate is required as a cofactor. Requires Fe(2+) as cofactor.

It carries out the reaction jasmonate + 2-oxoglutarate + O2 = (1R,2R)-12-hydroxyjasmonate + succinate + CO2. 2-oxoglutarate-dependent dioxygenase involved in the oxidation of jasmonate (JA), a stress-induced phytohormone synthesized in response to attack by pathogens and herbivores, which triggers the activation of defense responses via the JA-mediated signaling pathway. Converts JA to 12-hydroxyjasmonate (12OH-JA), an inactive form of JA. Is specific to free JA, and cannot oxidize the bioactive form jasmonoyl-L-isoleucine (JA-Ile) or other JA-amino acid conjugates. Prevents over-accumulation of JA and indirectly its bioactive form JA-Ile under stress response. Acts as a negative regulator of JA-mediated defense signaling, by contributing to 12OH-JA accumulation, which represses JA defense responses upon infection by the fungal pathogen Botrytis cinerea. Acts as a negative regulator of JA-mediated defense responses upon infestation by the herbivorous caterpillar Mamestra brassicae. This is Jasmonate-induced oxygenase 3 from Arabidopsis thaliana (Mouse-ear cress).